The following is a 124-amino-acid chain: Large ribosomal subunit protein bL12 (124 aa).

Basic and acidic residues predominate over residues 102 to 116; the sequence is MSKEDAEAAKTKLEE. The tract at residues 102–124 is disordered; sequence MSKEDAEAAKTKLEEAGASVELK.

Belongs to the bacterial ribosomal protein bL12 family. In terms of assembly, homodimer. Part of the ribosomal stalk of the 50S ribosomal subunit. Forms a multimeric L10(L12)X complex, where L10 forms an elongated spine to which 2 to 4 L12 dimers bind in a sequential fashion. Binds GTP-bound translation factors.

Functionally, forms part of the ribosomal stalk which helps the ribosome interact with GTP-bound translation factors. Is thus essential for accurate translation. The sequence is that of Large ribosomal subunit protein bL12 from Chromohalobacter salexigens (strain ATCC BAA-138 / DSM 3043 / CIP 106854 / NCIMB 13768 / 1H11).